We begin with the raw amino-acid sequence, 175 residues long: Ribosome maturation factor RimM (175 aa).

In terms of domain architecture, PRC barrel spans 99–172 (EGEFHLLDLV…WLRLTPPPGL (74 aa)).

This sequence belongs to the RimM family. In terms of assembly, binds ribosomal protein uS19.

It localises to the cytoplasm. Its function is as follows. An accessory protein needed during the final step in the assembly of 30S ribosomal subunit, possibly for assembly of the head region. Essential for efficient processing of 16S rRNA. May be needed both before and after RbfA during the maturation of 16S rRNA. It has affinity for free ribosomal 30S subunits but not for 70S ribosomes. The protein is Ribosome maturation factor RimM of Synechococcus sp. (strain WH7803).